A 284-amino-acid chain; its full sequence is Phosphatidylserine decarboxylase proenzyme (284 aa).

Active-site charge relay system; for autoendoproteolytic cleavage activity residues include D88, H145, and S248. The active-site Schiff-base intermediate with substrate; via pyruvic acid; for decarboxylase activity is the S248. The residue at position 248 (S248) is a Pyruvic acid (Ser); by autocatalysis.

It belongs to the phosphatidylserine decarboxylase family. PSD-B subfamily. Prokaryotic type I sub-subfamily. As to quaternary structure, heterodimer of a large membrane-associated beta subunit and a small pyruvoyl-containing alpha subunit. Requires pyruvate as cofactor. In terms of processing, is synthesized initially as an inactive proenzyme. Formation of the active enzyme involves a self-maturation process in which the active site pyruvoyl group is generated from an internal serine residue via an autocatalytic post-translational modification. Two non-identical subunits are generated from the proenzyme in this reaction, and the pyruvate is formed at the N-terminus of the alpha chain, which is derived from the carboxyl end of the proenzyme. The autoendoproteolytic cleavage occurs by a canonical serine protease mechanism, in which the side chain hydroxyl group of the serine supplies its oxygen atom to form the C-terminus of the beta chain, while the remainder of the serine residue undergoes an oxidative deamination to produce ammonia and the pyruvoyl prosthetic group on the alpha chain. During this reaction, the Ser that is part of the protease active site of the proenzyme becomes the pyruvoyl prosthetic group, which constitutes an essential element of the active site of the mature decarboxylase.

It localises to the cell membrane. It catalyses the reaction a 1,2-diacyl-sn-glycero-3-phospho-L-serine + H(+) = a 1,2-diacyl-sn-glycero-3-phosphoethanolamine + CO2. Its pathway is phospholipid metabolism; phosphatidylethanolamine biosynthesis; phosphatidylethanolamine from CDP-diacylglycerol: step 2/2. In terms of biological role, catalyzes the formation of phosphatidylethanolamine (PtdEtn) from phosphatidylserine (PtdSer). The chain is Phosphatidylserine decarboxylase proenzyme from Albidiferax ferrireducens (strain ATCC BAA-621 / DSM 15236 / T118) (Rhodoferax ferrireducens).